The following is a 938-amino-acid chain: Isoleucine--tRNA ligase (938 aa).

Positions 58–68 (PYANGSIHIGH) match the 'HIGH' region motif. Lys183 carries the post-translational modification N6-acetyllysine. Residue Glu561 participates in L-isoleucyl-5'-AMP binding. The 'KMSKS' region motif lies at 602–606 (KMSKS). Position 605 (Lys605) interacts with ATP. The Zn(2+) site is built by Cys901, Cys904, Cys921, and Cys924.

Belongs to the class-I aminoacyl-tRNA synthetase family. IleS type 1 subfamily. In terms of assembly, monomer. Zn(2+) serves as cofactor.

The protein localises to the cytoplasm. The enzyme catalyses tRNA(Ile) + L-isoleucine + ATP = L-isoleucyl-tRNA(Ile) + AMP + diphosphate. In terms of biological role, catalyzes the attachment of isoleucine to tRNA(Ile). As IleRS can inadvertently accommodate and process structurally similar amino acids such as valine, to avoid such errors it has two additional distinct tRNA(Ile)-dependent editing activities. One activity is designated as 'pretransfer' editing and involves the hydrolysis of activated Val-AMP. The other activity is designated 'posttransfer' editing and involves deacylation of mischarged Val-tRNA(Ile). The chain is Isoleucine--tRNA ligase from Escherichia coli O17:K52:H18 (strain UMN026 / ExPEC).